Consider the following 195-residue polypeptide: MVSSCCGSVCSDQSCGQGLGQESCCRPSCCQTTCCRTTCCRPSCCISSCCRPSCCISSCCKPSCCRTTCCRPSCCISSCCRPSCCISSCCKPSCCRTTCCRPSCCISSCCRPSCCISSCCKPSCCQTTCCRPSCCISSCYRPQCCQPSCCRPACCISSCCHPSCCVSSCRCPFSCPTTCCRTTCFHPICCGSSCC.

28 consecutive repeat copies span residues 34 to 38 (CCRTT), 39 to 43 (CCRPS), 44 to 48 (CCISS), 49 to 53 (CCRPS), 54 to 58 (CCISS), 59 to 63 (CCKPS), 64 to 68 (CCRTT), 69 to 73 (CCRPS), 74 to 78 (CCISS), 79 to 83 (CCRPS), 84 to 88 (CCISS), 89 to 93 (CCKPS), 94 to 98 (CCRTT), 99 to 103 (CCRPS), 104 to 108 (CCISS), 109 to 113 (CCRPS), 114 to 118 (CCISS), 119 to 123 (CCKPS), 124 to 128 (CCQTT), 129 to 133 (CCRPS), 134 to 138 (CCISS), 144 to 148 (CCQPS), 149 to 153 (CCRPA), 154 to 158 (CCISS), 159 to 163 (CCHPS), 164 to 168 (CCVSS), 179 to 183 (CCRTT), and 189 to 193 (CCGSS). Residues 34–193 (CCRTTCCRPS…CFHPICCGSS (160 aa)) are 29 X 5 AA repeats of C-C-[GIKRQVH]-[SPT]-[STA].

This sequence belongs to the KRTAP type 4 family. Interacts with hair keratins. In terms of tissue distribution, expressed specifically in the middle/uper portions of the hair cortex. Not detected in the hair matrix or cuticle.

Its function is as follows. In the hair cortex, hair keratin intermediate filaments are embedded in an interfilamentous matrix, consisting of hair keratin-associated proteins (KRTAP), which are essential for the formation of a rigid and resistant hair shaft through their extensive disulfide bond cross-linking with abundant cysteine residues of hair keratins. The matrix proteins include the high-sulfur and high-glycine-tyrosine keratins. The sequence is that of Keratin-associated protein 4-3 (KRTAP4-3) from Homo sapiens (Human).